We begin with the raw amino-acid sequence, 1583 residues long: Protein mesh (1583 aa).

The first 21 residues, 1 to 21, serve as a signal peptide directing secretion; sequence MGVKIKLVLAVVLILSANVLG. At 22–1182 the chain is on the extracellular side; the sequence is QDEIVNDTES…EFSQRALFLT (1161 aa). One can recognise an NIDO domain in the interval 260-415; the sequence is GIYFRLDRDL…GRHIFRIDEN (156 aa). An AMOP domain is found at 647–798; it reads GQRWSNSMCN…VGCETFRFER (152 aa). One can recognise a VWFD domain in the interval 811–1019; the sequence is GVAGIFGDPH…HWQLTDREQR (209 aa). Residues 1110 to 1170 form the Sushi domain; the sequence is ISCGILETPR…PDYGYTECLR (61 aa). 2 disulfide bridges follow: C1112-C1152 and C1138-C1168. The chain crosses the membrane as a helical span at residues 1183–1203; sequence WGVIVAVILPLGLLICLLWFW. Over 1204-1472 the chain is Cytoplasmic; the sequence is CWHKPRSEGK…QEYSSRTLGA (269 aa). The span at 1232–1250 shows a compositional bias: polar residues; that stretch reads LRSSSMGNITDTMKSSTIP. Residues 1232–1448 are disordered; that stretch reads LRSSSMGNIT…IPEAPKSAPV (217 aa). Residues 1291–1300 show a composition bias toward basic and acidic residues; that stretch reads GKSDSGKSDK. Polar residues predominate over residues 1405–1416; the sequence is PIPSQYSPTYSE. The helical transmembrane segment at 1473–1493 threads the bilayer; that stretch reads TWGIISAVMLPIIIILICVAW. The Extracellular portion of the chain corresponds to 1494-1583; that stretch reads RILQRRKAEE…RQWGGETEIN (90 aa). The span at 1521–1539 shows a compositional bias: basic and acidic residues; it reads DSVKVTSDDESIPYKKDVT. The disordered stretch occupies residues 1521-1583; sequence DSVKVTSDDE…RQWGGETEIN (63 aa).

As to expression, in fifth instar larvae, expressed in midgut epithelial cells (at protein level).

The protein localises to the membrane. It localises to the cell junction. The protein resides in the septate junction. It is found in the lateral cell membrane. Its function is as follows. May be required for the proper organization of smooth septate junctions and for the barrier function of the midgut epithelium. The protein is Protein mesh of Bombyx mori (Silk moth).